The following is a 209-amino-acid chain: D-aminoacyl-tRNA deacylase 1 (209 aa).

The Gly-cisPro motif, important for rejection of L-amino acids signature appears at 139–140; it reads GP. Residues 142-209 form a disordered region; sequence TIELESPAPG…EGDVSSEREP (68 aa). 2 stretches are compositionally biased toward basic and acidic residues: residues 159–170 and 181–194; these read QLSKLEKQQQRK and SSKERNAPRKEDRS. S197, S204, and S205 each carry phosphoserine.

The protein belongs to the DTD family. In terms of assembly, homodimer. Interacts with CDC45 and TOPBP1. Preferentially phosphorylated in cells arrested early in S phase. Phosphorylation in the C-terminus weakens the interaction with CDC45.

It localises to the nucleus. The protein localises to the cytoplasm. It carries out the reaction glycyl-tRNA(Ala) + H2O = tRNA(Ala) + glycine + H(+). The catalysed reaction is a D-aminoacyl-tRNA + H2O = a tRNA + a D-alpha-amino acid + H(+). An aminoacyl-tRNA editing enzyme that deacylates mischarged D-aminoacyl-tRNAs. Also deacylates mischarged glycyl-tRNA(Ala), protecting cells against glycine mischarging by AlaRS. Acts via tRNA-based rather than protein-based catalysis; rejects L-amino acids rather than detecting D-amino acids in the active site. By recycling D-aminoacyl-tRNA to D-amino acids and free tRNA molecules, this enzyme counteracts the toxicity associated with the formation of D-aminoacyl-tRNA entities in vivo and helps enforce protein L-homochirality. Functionally, ATPase involved in DNA replication, may facilitate loading of CDC45 onto pre-replication complexes. In Mus musculus (Mouse), this protein is D-aminoacyl-tRNA deacylase 1 (Dtd1).